Here is a 651-residue protein sequence, read N- to C-terminus: Probable endo-1,3(4)-beta-glucanase NFIA_089530 (651 aa).

A signal peptide spans 1-21 (MAPSSLFLSVGSLIASSLVSA). One can recognise a GH16 domain in the interval 36 to 289 (ESWQGESFIN…WAGNVFAEST (254 aa)). Residue Asn-64 is glycosylated (N-linked (GlcNAc...) asparagine). Residue Glu-145 is the Nucleophile of the active site. The Proton donor role is filled by Glu-150. Residue Asn-200 is glycosylated (N-linked (GlcNAc...) asparagine). The span at 364-378 (PVPAETTAVPQPAQT) shows a compositional bias: low complexity. Disordered regions lie at residues 364-422 (PVPA…ESTS) and 508-557 (SEIP…PVPA). 2 stretches are compositionally biased toward polar residues: residues 379 to 400 (NTVATSAADYATQSSAETTTVP) and 520 to 535 (QAVSTGSFDDSDTAQG). Positions 542–557 (SIASASAAPSTIPVPA) are enriched in low complexity. Asn-629 carries GPI-anchor amidated asparagine lipidation. Residues 630 to 651 (GANRMSVGLSGLIGVMFIAALA) constitute a propeptide, removed in mature form.

This sequence belongs to the glycosyl hydrolase 16 family.

It is found in the cell membrane. It catalyses the reaction Endohydrolysis of (1-&gt;3)- or (1-&gt;4)-linkages in beta-D-glucans when the glucose residue whose reducing group is involved in the linkage to be hydrolyzed is itself substituted at C-3.. Its function is as follows. Mixed-linked glucanase involved in the degradation of complex natural cellulosic substrates. This is Probable endo-1,3(4)-beta-glucanase NFIA_089530 from Neosartorya fischeri (strain ATCC 1020 / DSM 3700 / CBS 544.65 / FGSC A1164 / JCM 1740 / NRRL 181 / WB 181) (Aspergillus fischerianus).